A 495-amino-acid chain; its full sequence is uncharacterized protein (495 aa).

Residues 305-317 are compositionally biased toward low complexity; it reads DYNNNNNENYSGS. Residues 305-404 form a disordered region; the sequence is DYNNNNNENY…LDEEDNRKNK (100 aa). Residues 335–347 are compositionally biased toward acidic residues; it reads YDNDENNDDENND. Over residues 348 to 363 the composition is skewed to low complexity; sequence ENNNNNNNNNNNNNNN. A compositionally biased stretch (acidic residues) spans 386 to 398; it reads SDDDEADNELDEE.

This is an uncharacterized protein from Dictyostelium discoideum (Social amoeba).